The chain runs to 566 residues: Oxygen-dependent choline dehydrogenase (566 aa).

7 to 36 is a binding site for FAD; that stretch reads DYIICGAGSAGNVLATRLTEDPDVTVLLLE. Residues 180–202 form a disordered region; the sequence is NGYQQEGFGPMDRTVTPKGRRAS. The active-site Proton acceptor is the His474.

This sequence belongs to the GMC oxidoreductase family. FAD is required as a cofactor.

It catalyses the reaction choline + A = betaine aldehyde + AH2. The enzyme catalyses betaine aldehyde + NAD(+) + H2O = glycine betaine + NADH + 2 H(+). It functions in the pathway amine and polyamine biosynthesis; betaine biosynthesis via choline pathway; betaine aldehyde from choline (cytochrome c reductase route): step 1/1. Involved in the biosynthesis of the osmoprotectant glycine betaine. Catalyzes the oxidation of choline to betaine aldehyde and betaine aldehyde to glycine betaine at the same rate. This chain is Oxygen-dependent choline dehydrogenase, found in Burkholderia cenocepacia (strain HI2424).